The following is a 90-amino-acid chain: MAFFGKRKEKRKFTQQNPLFKRRKFCRFTAAGVEEIDYKDLDTLRDFVQENGKIIPARLTGTKAHYQRQLDTAIKRARFLALLPYTDNHN.

Belongs to the bacterial ribosomal protein bS18 family. As to quaternary structure, part of the 30S ribosomal subunit. Forms a tight heterodimer with protein bS6.

Binds as a heterodimer with protein bS6 to the central domain of the 16S rRNA, where it helps stabilize the platform of the 30S subunit. This is Small ribosomal subunit protein bS18 from Bordetella petrii (strain ATCC BAA-461 / DSM 12804 / CCUG 43448).